Reading from the N-terminus, the 326-residue chain is Transcription cofactor vestigial-like protein 3 (326 aa).

A disordered region spans residues S54–A82. K62 is covalently cross-linked (Glycyl lysine isopeptide (Lys-Gly) (interchain with G-Cter in SUMO2)). A compositionally biased stretch (acidic residues) spans E64–K78. A Glycyl lysine isopeptide (Lys-Gly) (interchain with G-Cter in SUMO2) cross-link involves residue K129. A disordered region spans residues T184 to E208.

It belongs to the vestigial family.

Its subcellular location is the nucleus. Its function is as follows. May act as a specific coactivator for the mammalian TEFs. In Mus musculus (Mouse), this protein is Transcription cofactor vestigial-like protein 3.